Consider the following 474-residue polypeptide: MHTTTKRRKAMDWLNFDPIPEVDRLFRFTCKHPTLHVHMTGSYGHMFVDISDLPASARHYLALMAASRHRCLSLMDHHRRKFLEKGGQQMWLLGIDWSYMKFRKLDYLNRMLCHRPWMIHWKNLAVLFARRTPDGGPAFFSVCSLHHAVGIMSMTHAMCTVICCIGLERRVDLTQDEIDFLNIDDLDYWEARMSAYFRKVPDRRPTEVEYLISELKKTEKGQTRPPAKMCAMTTETIESLISAPAATYSSNRKNYSPVLLLANIDENGEDIMEKEPPCNYPIYSHHRTFGYIDFRKRPEKDIPPFRVEEFGWDHVYNTMNEYTDTLTSRLDRMFDHIRTLTGNMPSGSSHASGDGEPPAAVNQNEIDTAAFREAIWNYTQGLYGVRVDDYDYSKINRVLDKGTKTFIKLAACYPHKLTTEFTRALPGFKDSEKIHVVMMVAMARFQASMFHYTRAVCNYNAMCLSKKGWRKPLD.

Belongs to the sestrin family.

It is found in the nucleus. The protein localises to the cytoplasm. Its function is as follows. May function as a negative feedback regulator of TOR function. This chain is Sestrin homolog, found in Caenorhabditis elegans.